Reading from the N-terminus, the 270-residue chain is Protein MGF 110-1L (270 aa).

Positions 1–26 are cleaved as a signal peptide; that stretch reads MLGLQIFTLLSIPTLLYTYEIEPLER. Over 27-117 the chain is Extracellular; it reads TSTPPEKEFG…HERHEADIRK (91 aa). The A repeat unit spans residues 27 to 146; sequence TSTPPEKEFG…YIRKRSLQTV (120 aa). An N-linked (GlcNAc...) asparagine; by host glycan is attached at Asn75. Residues 118-138 traverse the membrane as a helical segment; that stretch reads WQKLLTYGFYLAGCILAVNYI. Residues 139–145 lie on the Cytoplasmic side of the membrane; that stretch reads RKRSLQT. A helical membrane pass occupies residues 146-166; that stretch reads VMYLLVFLVISFLLSQLMLYG. The B repeat unit spans residues 147–270; sequence MYLLVFLVIS…DNLMKKQDIM (124 aa). At 167 to 270 the chain is on the extracellular side; sequence ELEDKKHKIG…DNLMKKQDIM (104 aa).

Belongs to the asfivirus MGF 110 family.

The protein resides in the membrane. In terms of biological role, plays a role in virus cell tropism, and may be required for efficient virus replication in macrophages. The protein is Protein MGF 110-1L of African swine fever virus (isolate Pig/Portugal/OURT88/1988) (ASFV).